Here is a 77-residue protein sequence, read N- to C-terminus: U8-lycotoxin-Ls1d (77 aa).

The signal sequence occupies residues 1-20 (MKLIIFTGLVLFAIVSLIEA). Residues 21–26 (QAENEK) constitute a propeptide that is removed on maturation.

It belongs to the neurotoxin 19 (CSTX) family. 08 (U8-Lctx) subfamily. Contains 4 disulfide bonds. In terms of tissue distribution, expressed by the venom gland.

The protein localises to the secreted. This Lycosa singoriensis (Wolf spider) protein is U8-lycotoxin-Ls1d.